A 297-amino-acid polypeptide reads, in one-letter code: SWIRM domain-containing protein laf1 (297 aa).

Disordered stretches follow at residues 50–70 (PKCS…KPTA) and 109–173 (STPA…EFSS). The span at 159–173 (QHNTRFKQSSREFSS) shows a compositional bias: polar residues. Residues 207–297 (LRSEWKGPPL…AFHDEGFFDD (91 aa)) form the SWIRM domain.

In terms of assembly, component of the RPD3C(L) complex.

It is found in the nucleus. In terms of biological role, component of the RPD3C(L) histone deacetylase complex (HDAC) responsible for the deacetylation of lysine residues on the N-terminal part of the core histones (H2A, H2B, H3 and H4). Histone deacetylation gives a tag for epigenetic repression and plays an important role in transcriptional regulation, cell cycle progression and developmental events. This is SWIRM domain-containing protein laf1 (laf1) from Schizosaccharomyces pombe (strain 972 / ATCC 24843) (Fission yeast).